An 897-amino-acid polypeptide reads, in one-letter code: Leucine--tRNA ligase (897 aa).

Residues 42 to 52 (PYPSGKLHMGH) carry the 'HIGH' region motif. The 'KMSKS' region signature appears at 645–649 (TMSKS). Lys-648 lines the ATP pocket.

The protein belongs to the class-I aminoacyl-tRNA synthetase family.

The protein localises to the cytoplasm. It carries out the reaction tRNA(Leu) + L-leucine + ATP = L-leucyl-tRNA(Leu) + AMP + diphosphate. The protein is Leucine--tRNA ligase of Paracidovorax citrulli (strain AAC00-1) (Acidovorax citrulli).